Reading from the N-terminus, the 294-residue chain is Glycine--tRNA ligase alpha subunit (294 aa).

The protein belongs to the class-II aminoacyl-tRNA synthetase family. In terms of assembly, tetramer of two alpha and two beta subunits.

It localises to the cytoplasm. It catalyses the reaction tRNA(Gly) + glycine + ATP = glycyl-tRNA(Gly) + AMP + diphosphate. This Polynucleobacter asymbioticus (strain DSM 18221 / CIP 109841 / QLW-P1DMWA-1) (Polynucleobacter necessarius subsp. asymbioticus) protein is Glycine--tRNA ligase alpha subunit.